Here is a 340-residue protein sequence, read N- to C-terminus: Porphobilinogen deaminase (340 aa).

S-(dipyrrolylmethanemethyl)cysteine is present on Cys258.

It belongs to the HMBS family. Dipyrromethane is required as a cofactor.

The enzyme catalyses 4 porphobilinogen + H2O = hydroxymethylbilane + 4 NH4(+). It participates in porphyrin-containing compound metabolism; protoporphyrin-IX biosynthesis; coproporphyrinogen-III from 5-aminolevulinate: step 2/4. Tetrapolymerization of the monopyrrole PBG into the hydroxymethylbilane pre-uroporphyrinogen in several discrete steps. This Candida albicans (strain SC5314 / ATCC MYA-2876) (Yeast) protein is Porphobilinogen deaminase (HEM3).